We begin with the raw amino-acid sequence, 122 residues long: Large ribosomal subunit protein eL18 (122 aa).

The protein belongs to the eukaryotic ribosomal protein eL18 family.

This Thermoplasma volcanium (strain ATCC 51530 / DSM 4299 / JCM 9571 / NBRC 15438 / GSS1) protein is Large ribosomal subunit protein eL18.